We begin with the raw amino-acid sequence, 515 residues long: Maturase K (515 aa).

This sequence belongs to the intron maturase 2 family. MatK subfamily.

It is found in the plastid. Its subcellular location is the chloroplast. In terms of biological role, usually encoded in the trnK tRNA gene intron. Probably assists in splicing its own and other chloroplast group II introns. The polypeptide is Maturase K (Pinus pumila (Dwarf Siberian pine)).